The sequence spans 278 residues: MQWLRVRESPGEATGHRVTMGTAALGPVWAALLLFLLMCEIPMVELTFDRAVASGCQRCCDSEDPLDPAHVSSASSSGRPHALPEIRPYINITILKGDKGDPGPMGLPGYMGREGPQGEPGPQGSKGDKGEMGSPGAPCQKRFFAFSVGRKTALHSGEDFQTLLFERVFVNLDGCFDMATGQFAAPLRGIYFFSLNVHSWNYKETYVHIMHNQKEAVILYAQPSERSIMQSQSVMLDLAYGDRVWVRLFKRQRENAIYSNDFDTYITFSGHLIKAEDD.

An N-terminal signal peptide occupies residues Met1–Leu46. N-linked (GlcNAc...) asparagine glycosylation occurs at Asn91. Residues Gly97–Pro138 form the Collagen-like domain. The segment at Lys99–Pro135 is disordered. A C1q domain is found at Cys139 to Ser259.

It is found in the secreted. The sequence is that of Complement C1q tumor necrosis factor-related protein 6 (C1QTNF6) from Homo sapiens (Human).